A 206-amino-acid polypeptide reads, in one-letter code: Cytochrome c oxidase assembly protein CtaG (206 aa).

The Cytoplasmic portion of the chain corresponds to 1–12 (MSKKPAGKNSNR). Residues 13-35 (IVAAVCLAFFTGMIGMAYAAVPL) traverse the membrane as a helical; Signal-anchor for type II membrane protein segment. The Periplasmic portion of the chain corresponds to 36–206 (YKMFCQATGY…ISDTEANLGG (171 aa)). The interval 184-206 (VASSEPVQGTSKIISDTEANLGG) is disordered. A compositionally biased stretch (polar residues) spans 188-206 (EPVQGTSKIISDTEANLGG).

This sequence belongs to the COX11/CtaG family.

The protein resides in the cell inner membrane. In terms of biological role, exerts its effect at some terminal stage of cytochrome c oxidase synthesis, probably by being involved in the insertion of the copper B into subunit I. This is Cytochrome c oxidase assembly protein CtaG from Mesorhizobium japonicum (strain LMG 29417 / CECT 9101 / MAFF 303099) (Mesorhizobium loti (strain MAFF 303099)).